Consider the following 72-residue polypeptide: UPF0270 protein YheU (72 aa).

The protein belongs to the UPF0270 family.

In Salmonella arizonae (strain ATCC BAA-731 / CDC346-86 / RSK2980), this protein is UPF0270 protein YheU.